Here is a 129-residue protein sequence, read N- to C-terminus: Succinate dehydrogenase assembly factor 3, mitochondrial (129 aa).

The transit peptide at 1-21 (MQVNHLLRQAVKQTTRAGRLG) directs the protein to the mitochondrion.

This sequence belongs to the complex I LYR family. SDHAF3 subfamily. As to quaternary structure, interacts with the iron-sulfur protein subunit within the SDH catalytic dimer.

The protein resides in the mitochondrion matrix. Functionally, plays an essential role in the assembly of succinate dehydrogenase (SDH), an enzyme complex (also referred to as respiratory complex II) that is a component of both the tricarboxylic acid (TCA) cycle and the mitochondrial electron transport chain, and which couples the oxidation of succinate to fumarate with the reduction of ubiquinone (coenzyme Q) to ubiquinol. Promotes maturation of the iron-sulfur protein subunit of the SDH catalytic dimer, protecting it from the deleterious effects of oxidants. May act together with SDHAF1. This Kluyveromyces lactis (strain ATCC 8585 / CBS 2359 / DSM 70799 / NBRC 1267 / NRRL Y-1140 / WM37) (Yeast) protein is Succinate dehydrogenase assembly factor 3, mitochondrial.